Reading from the N-terminus, the 611-residue chain is Procollagen galactosyltransferase 1-B (611 aa).

The N-terminal stretch at 1–24 (MSQAGVERLLKGLQILVLVLRLSA) is a signal peptide. N85, N173, N370, N373, and N568 each carry an N-linked (GlcNAc...) asparagine glycan. Positions 576 to 591 (DRAKSRKTHQQEKLRS) are enriched in basic and acidic residues. The disordered stretch occupies residues 576–611 (DRAKSRKTHQQEKLRSEALNTPSMGSPFDNTARDEL). Positions 608 to 611 (RDEL) match the Prevents secretion from ER motif.

This sequence belongs to the glycosyltransferase 25 family.

It is found in the endoplasmic reticulum lumen. It catalyses the reaction (5R)-5-hydroxy-L-lysyl-[collagen] + UDP-alpha-D-galactose = (5R)-5-O-(beta-D-galactosyl)-5-hydroxy-L-lysyl-[collagen] + UDP + H(+). Its function is as follows. Beta-galactosyltransferase that transfers beta-galactose to hydroxylysine residues of type I collagen. By acting on collagen glycosylation, facilitates the formation of collagen triple helix. This is Procollagen galactosyltransferase 1-B (colgalt1-b) from Xenopus laevis (African clawed frog).